The chain runs to 1282 residues: ATP-dependent helicase/nuclease subunit A (1282 aa).

The 472-residue stretch at 10–481 folds into the UvrD-like helicase ATP-binding domain; sequence SKWTDSQRQV…IELQENFRSS (472 aa). 31–38 contributes to the ATP binding site; the sequence is AGAGAGKT. In terms of domain architecture, UvrD-like helicase C-terminal spans 516–820; that stretch reads KPRELYLNED…RLMSIHKSKG (305 aa).

Belongs to the helicase family. AddA subfamily. In terms of assembly, heterodimer of AddA and AddB/RexB. Mg(2+) is required as a cofactor.

The enzyme catalyses Couples ATP hydrolysis with the unwinding of duplex DNA by translocating in the 3'-5' direction.. It catalyses the reaction ATP + H2O = ADP + phosphate + H(+). The heterodimer acts as both an ATP-dependent DNA helicase and an ATP-dependent, dual-direction single-stranded exonuclease. Recognizes the chi site generating a DNA molecule suitable for the initiation of homologous recombination. The AddA nuclease domain is required for chi fragment generation; this subunit has the helicase and 3' -&gt; 5' nuclease activities. The polypeptide is ATP-dependent helicase/nuclease subunit A (Natranaerobius thermophilus (strain ATCC BAA-1301 / DSM 18059 / JW/NM-WN-LF)).